The following is an 871-amino-acid chain: DNA mismatch repair protein MutS (871 aa).

ATP is bound at residue G621–S628.

It belongs to the DNA mismatch repair MutS family.

Functionally, this protein is involved in the repair of mismatches in DNA. It is possible that it carries out the mismatch recognition step. This protein has a weak ATPase activity. This Geobacter sulfurreducens (strain ATCC 51573 / DSM 12127 / PCA) protein is DNA mismatch repair protein MutS.